The chain runs to 155 residues: S-ribosylhomocysteine lyase (155 aa).

Fe cation-binding residues include His58, His62, and Cys125.

Belongs to the LuxS family. In terms of assembly, homodimer. Requires Fe cation as cofactor.

It catalyses the reaction S-(5-deoxy-D-ribos-5-yl)-L-homocysteine = (S)-4,5-dihydroxypentane-2,3-dione + L-homocysteine. Involved in the synthesis of autoinducer 2 (AI-2) which is secreted by bacteria and is used to communicate both the cell density and the metabolic potential of the environment. The regulation of gene expression in response to changes in cell density is called quorum sensing. Catalyzes the transformation of S-ribosylhomocysteine (RHC) to homocysteine (HC) and 4,5-dihydroxy-2,3-pentadione (DPD). The protein is S-ribosylhomocysteine lyase of Chromohalobacter salexigens (strain ATCC BAA-138 / DSM 3043 / CIP 106854 / NCIMB 13768 / 1H11).